The chain runs to 103 residues: V-type ATP synthase subunit F (103 aa).

The protein belongs to the V-ATPase F subunit family.

Its function is as follows. Produces ATP from ADP in the presence of a proton gradient across the membrane. The sequence is that of V-type ATP synthase subunit F from Clostridium botulinum (strain Alaska E43 / Type E3).